We begin with the raw amino-acid sequence, 469 residues long: Uronate isomerase (469 aa).

The protein belongs to the metallo-dependent hydrolases superfamily. Uronate isomerase family.

The enzyme catalyses D-glucuronate = D-fructuronate. It catalyses the reaction aldehydo-D-galacturonate = keto-D-tagaturonate. It functions in the pathway carbohydrate metabolism; pentose and glucuronate interconversion. The protein is Uronate isomerase of Pectobacterium carotovorum subsp. carotovorum (strain PC1).